Here is a 345-residue protein sequence, read N- to C-terminus: tRNA N6-adenosine threonylcarbamoyltransferase (345 aa).

Fe cation-binding residues include H109 and H113. Substrate is bound by residues 136-140, D169, G182, D186, and N284; that span reads TVSGG. D312 lines the Fe cation pocket.

It belongs to the KAE1 / TsaD family. Requires Fe(2+) as cofactor.

It localises to the cytoplasm. The catalysed reaction is L-threonylcarbamoyladenylate + adenosine(37) in tRNA = N(6)-L-threonylcarbamoyladenosine(37) in tRNA + AMP + H(+). Required for the formation of a threonylcarbamoyl group on adenosine at position 37 (t(6)A37) in tRNAs that read codons beginning with adenine. Is involved in the transfer of the threonylcarbamoyl moiety of threonylcarbamoyl-AMP (TC-AMP) to the N6 group of A37, together with TsaE and TsaB. TsaD likely plays a direct catalytic role in this reaction. The polypeptide is tRNA N6-adenosine threonylcarbamoyltransferase (Prosthecochloris aestuarii (strain DSM 271 / SK 413)).